The following is a 211-amino-acid chain: Large ribosomal subunit protein eL13 (211 aa).

Belongs to the eukaryotic ribosomal protein eL13 family. In terms of assembly, component of the 60S large ribosomal subunit (LSU).

It is found in the cytoplasm. Its function is as follows. Component of the ribosome, a large ribonucleoprotein complex responsible for the synthesis of proteins in the cell. The small ribosomal subunit (SSU) binds messenger RNAs (mRNAs) and translates the encoded message by selecting cognate aminoacyl-transfer RNA (tRNA) molecules. The large subunit (LSU) contains the ribosomal catalytic site termed the peptidyl transferase center (PTC), which catalyzes the formation of peptide bonds, thereby polymerizing the amino acids delivered by tRNAs into a polypeptide chain. The nascent polypeptides leave the ribosome through a tunnel in the LSU and interact with protein factors that function in enzymatic processing, targeting, and the membrane insertion of nascent chains at the exit of the ribosomal tunnel. As part of the LSU, it is probably required for its formation and the maturation of rRNAs. The chain is Large ribosomal subunit protein eL13 (rpl13) from Danio rerio (Zebrafish).